Reading from the N-terminus, the 454-residue chain is UPF0210 protein Mlab_1030 (454 aa).

This sequence belongs to the UPF0210 family.

The protein is UPF0210 protein Mlab_1030 of Methanocorpusculum labreanum (strain ATCC 43576 / DSM 4855 / Z).